Here is a 269-residue protein sequence, read N- to C-terminus: Formamidopyrimidine-DNA glycosylase (269 aa).

Catalysis depends on proline 2, which acts as the Schiff-base intermediate with DNA. Glutamate 3 (proton donor) is an active-site residue. The active-site Proton donor; for beta-elimination activity is lysine 57. DNA-binding residues include histidine 90, arginine 109, and lysine 150. The FPG-type zinc-finger motif lies at 235 to 269 (QVYGRKGEPCRVCGTPIVATKHAQRATFYCRHCQK). Catalysis depends on arginine 259, which acts as the Proton donor; for delta-elimination activity.

Belongs to the FPG family. Monomer. It depends on Zn(2+) as a cofactor.

The enzyme catalyses Hydrolysis of DNA containing ring-opened 7-methylguanine residues, releasing 2,6-diamino-4-hydroxy-5-(N-methyl)formamidopyrimidine.. The catalysed reaction is 2'-deoxyribonucleotide-(2'-deoxyribose 5'-phosphate)-2'-deoxyribonucleotide-DNA = a 3'-end 2'-deoxyribonucleotide-(2,3-dehydro-2,3-deoxyribose 5'-phosphate)-DNA + a 5'-end 5'-phospho-2'-deoxyribonucleoside-DNA + H(+). Functionally, involved in base excision repair of DNA damaged by oxidation or by mutagenic agents. Acts as a DNA glycosylase that recognizes and removes damaged bases. Has a preference for oxidized purines, such as 7,8-dihydro-8-oxoguanine (8-oxoG). Has AP (apurinic/apyrimidinic) lyase activity and introduces nicks in the DNA strand. Cleaves the DNA backbone by beta-delta elimination to generate a single-strand break at the site of the removed base with both 3'- and 5'-phosphates. This is Formamidopyrimidine-DNA glycosylase from Salmonella heidelberg (strain SL476).